The following is an 850-amino-acid chain: Pro-neuregulin-2, membrane-bound isoform (850 aa).

The segment at 1 to 96 (MRQVCCSALP…AAAAGGMRRD (96 aa)) is disordered. Residues 1 to 111 (MRQVCCSALP…SMLLFGVSLA (111 aa)) constitute a propeptide that is removed on maturation. The span at 20 to 59 (SSYSDSSSSSSERSSSSSSSSSESGSSSRSSSNNSSISRP) shows a compositional bias: low complexity. N-linked (GlcNAc...) asparagine glycans are attached at residues Asn-52 and Asn-53. A compositionally biased stretch (pro residues) spans 60–74 (AAPPEPRPQQQPQPR). Over residues 75 to 92 (SPAARRAAARSRAAAAGG) the composition is skewed to low complexity. The Extracellular segment spans residues 112 to 405 (CYSPSLKSVQ…QKAEELYQKR (294 aa)). N-linked (GlcNAc...) asparagine glycans are attached at residues Asn-147, Asn-278, and Asn-346. The region spanning 237 to 332 (PKLKKMKSQT…RGRLYVNSVS (96 aa)) is the Ig-like C2-type domain. 4 disulfides stabilise this stretch: Cys-257-Cys-311, Cys-345-Cys-359, Cys-353-Cys-370, and Cys-372-Cys-381. The 42-residue stretch at 341-382 (HARKCNETAKSYCVNGGVCYYIEGINQLSCKCPNGFFGQRCL) folds into the EGF-like domain. The chain crosses the membrane as a helical span at residues 406–426 (VLTITGICVALLVVGIVCVVA). Residues 427-850 (YCKTKKQRKQ…PRAKQDSAPL (424 aa)) lie on the Cytoplasmic side of the membrane. Disordered stretches follow at residues 492–535 (TFSG…DSQS), 566–585 (EERRRATAPPYHDSVDSLRD), 647–681 (LLRHPAPPGPGPGPGPGPGPGADMQRSYDSYYYPA), 700–788 (LPAS…DGAL), and 801–850 (AHDA…SAPL). Over residues 494–506 (SGSHSCSPSHHCS) the composition is skewed to low complexity. The span at 514 to 527 (HRHESHTWSLERSE) shows a compositional bias: basic and acidic residues. A compositionally biased stretch (pro residues) spans 651–665 (PAPPGPGPGPGPGPG). A compositionally biased stretch (low complexity) spans 750 to 767 (GLAAQRARAARDSLSLSS).

The protein belongs to the neuregulin family. In terms of assembly, interacts with ERBB3 and ERBB4. Proteolytic cleavage close to the plasma membrane on the external face leads to the release of the soluble growth factor form. In terms of processing, extensive glycosylation precedes the proteolytic cleavage. Restricted to the cerebellum in the adult.

Its subcellular location is the cell membrane. The protein localises to the secreted. Functionally, direct ligand for ERBB3 and ERBB4 tyrosine kinase receptors. Concomitantly recruits ERBB1 and ERBB2 coreceptors, resulting in ligand-stimulated tyrosine phosphorylation and activation of the ERBB receptors. May also promote the heterodimerization with the EGF receptor. The chain is Pro-neuregulin-2, membrane-bound isoform (NRG2) from Homo sapiens (Human).